A 48-amino-acid polypeptide reads, in one-letter code: Osteocalcin (48 aa).

Positions 1–46 constitute a Gla domain; the sequence is SFAVGSSYGAAPDPLEAQREVCELNPDCDELADHIGFQEAYRRFYG. Residues E16, E20, E23, and D29 each contribute to the Ca(2+) site. 3 positions are modified to 4-carboxyglutamate: E16, E20, and E23. Residues C22 and C28 are joined by a disulfide bond.

This sequence belongs to the osteocalcin/matrix Gla protein family. In terms of processing, gamma-carboxyglutamate residues are formed by vitamin K dependent carboxylation by GGCX. These residues are essential for the binding of calcium.

Its subcellular location is the secreted. Its function is as follows. The carboxylated form is one of the main organic components of the bone matrix, which constitutes 1-2% of the total bone protein. The carboxylated form binds strongly to apatite and calcium. This is Osteocalcin (BGLAP) from Dromaius novaehollandiae (Emu).